A 382-amino-acid polypeptide reads, in one-letter code: Galactokinase (382 aa).

34–37 serves as a coordination point for substrate; the sequence is EHTD. Residue 124–130 coordinates ATP; it reads GAGLSSS. Ser130 and Glu162 together coordinate Mg(2+). Catalysis depends on Asp174, which acts as the Proton acceptor. Position 223 (Tyr223) interacts with substrate.

The protein belongs to the GHMP kinase family. GalK subfamily.

Its subcellular location is the cytoplasm. The catalysed reaction is alpha-D-galactose + ATP = alpha-D-galactose 1-phosphate + ADP + H(+). It participates in carbohydrate metabolism; galactose metabolism. In terms of biological role, catalyzes the transfer of the gamma-phosphate of ATP to D-galactose to form alpha-D-galactose-1-phosphate (Gal-1-P). The polypeptide is Galactokinase (Salmonella paratyphi B (strain ATCC BAA-1250 / SPB7)).